Reading from the N-terminus, the 605-residue chain is Probable potassium transport system protein Kup (605 aa).

12 helical membrane-spanning segments follow: residues 17–37 (GLVF…IFAL), 45–65 (VFGI…VEYA), 96–116 (IAFV…DGVI), 140–160 (LGTL…FQFK), 165–185 (VAAA…VSGL), 211–231 (GISA…GEAL), 246–266 (AWYF…AFAL), 286–306 (LYIP…QALI), 338–358 (IYIG…MLIF), 367–387 (AYGL…TIIF), 394–414 (WKVP…ISNL), and 417–437 (LPHG…TILI).

Belongs to the HAK/KUP transporter (TC 2.A.72) family.

It is found in the cell inner membrane. It carries out the reaction K(+)(in) + H(+)(in) = K(+)(out) + H(+)(out). Transport of potassium into the cell. Likely operates as a K(+):H(+) symporter. This is Probable potassium transport system protein Kup from Geotalea uraniireducens (strain Rf4) (Geobacter uraniireducens).